A 212-amino-acid polypeptide reads, in one-letter code: Orotate phosphoribosyltransferase (212 aa).

Residues Arg95, Lys99, His101, and 121–129 (DDLITTGGS) contribute to the 5-phospho-alpha-D-ribose 1-diphosphate site. Residue Thr125 coordinates orotate.

This sequence belongs to the purine/pyrimidine phosphoribosyltransferase family. PyrE subfamily. Homodimer. It depends on Mg(2+) as a cofactor.

It catalyses the reaction orotidine 5'-phosphate + diphosphate = orotate + 5-phospho-alpha-D-ribose 1-diphosphate. It participates in pyrimidine metabolism; UMP biosynthesis via de novo pathway; UMP from orotate: step 1/2. Functionally, catalyzes the transfer of a ribosyl phosphate group from 5-phosphoribose 1-diphosphate to orotate, leading to the formation of orotidine monophosphate (OMP). This chain is Orotate phosphoribosyltransferase, found in Lactobacillus johnsonii (strain CNCM I-12250 / La1 / NCC 533).